Consider the following 256-residue polypeptide: Ribonuclease 3 (256 aa).

An RNase III domain is found at 3–125 (LDALQQRLGY…IVGAVFLDAG (123 aa)). A Mg(2+)-binding site is contributed by glutamate 38. Residue aspartate 42 is part of the active site. Aspartate 111 and glutamate 114 together coordinate Mg(2+). Glutamate 114 is an active-site residue. Residues 152–222 (DAKTLLQEYL…AKLALDEVQK (71 aa)) form the DRBM domain. The segment at 229–256 (KRSRAERTGKTRKQPQPQDPQLSLRLKE) is disordered.

Belongs to the ribonuclease III family. In terms of assembly, homodimer. Requires Mg(2+) as cofactor.

The protein localises to the cytoplasm. The catalysed reaction is Endonucleolytic cleavage to 5'-phosphomonoester.. Digests double-stranded RNA. Involved in the processing of primary rRNA transcript to yield the immediate precursors to the large and small rRNAs (23S and 16S). Processes some mRNAs, and tRNAs when they are encoded in the rRNA operon. Processes pre-crRNA and tracrRNA of type II CRISPR loci if present in the organism. The protein is Ribonuclease 3 of Cupriavidus taiwanensis (strain DSM 17343 / BCRC 17206 / CCUG 44338 / CIP 107171 / LMG 19424 / R1) (Ralstonia taiwanensis (strain LMG 19424)).